A 421-amino-acid polypeptide reads, in one-letter code: Zinc finger protein Pegasus (421 aa).

Residues 35-55 (GDKEAETLQGAGTEGDQNGLD) are disordered. 3 C2H2-type zinc fingers span residues 82 to 104 (LKCRYCNYASKGTARLIEHIRIH), 110 to 132 (HRCHLCPFASAYERHLEAHMRSH), and 138 to 161 (YKCELCSFRCSDRSNLSHHRRRKH). A compositionally biased stretch (polar residues) spans 229-238 (SMTKSSQTSG). Disordered regions lie at residues 229-249 (SMTKSSQTSGLPRDPQDLMVD) and 292-358 (QPAT…PTLP). The segment covering 292-313 (QPATPAVVSSVSASIAQSSSPT) has biased composition (low complexity). A compositionally biased stretch (polar residues) spans 339-351 (HTSTPSISNSQPS). 2 C2H2-type zinc fingers span residues 366–388 (HHCQHCDMYFADNILYTIHMGCH) and 394–418 (FQCNICGCKCKNKYDFACHFARGQH).

The protein belongs to the Ikaros C2H2-type zinc-finger protein family. Probably self-associates.

It localises to the nucleus. In terms of biological role, transcriptional repressor that binds the core 5'GNNTGTNG-3' DNA consensus sequence. The polypeptide is Zinc finger protein Pegasus (IKZF5) (Gallus gallus (Chicken)).